We begin with the raw amino-acid sequence, 221 residues long: Germin-like protein subfamily 1 member 15 (221 aa).

A signal peptide spans 1-21; that stretch reads MKVSMSLILITFWALVTIAKA. Cys-31 and Cys-48 form a disulfide bridge. One can recognise a Cupin type-1 domain in the interval 62 to 213; sequence SGLNQAGITN…AFQLDVNVVK (152 aa). Asn-77 carries N-linked (GlcNAc...) asparagine glycosylation. Mn(2+) is bound by residues His-110, His-112, Glu-117, and His-159.

Belongs to the germin family. Oligomer (believed to be a pentamer but probably hexamer).

It is found in the secreted. It localises to the extracellular space. The protein localises to the apoplast. Its function is as follows. May play a role in plant defense. Probably has no oxalate oxidase activity even if the active site is conserved. This chain is Germin-like protein subfamily 1 member 15, found in Arabidopsis thaliana (Mouse-ear cress).